Here is a 29-residue protein sequence, read N- to C-terminus: Glucagon (29 aa).

It belongs to the glucagon family.

It localises to the secreted. Its function is as follows. Promotes hydrolysis of glycogen and lipids, and raises the blood sugar level. In Thunnus obesus (Bigeye tuna), this protein is Glucagon (gcg).